A 130-amino-acid chain; its full sequence is Small ribosomal subunit protein uS9 (130 aa).

The protein belongs to the universal ribosomal protein uS9 family.

The chain is Small ribosomal subunit protein uS9 from Hamiltonella defensa subsp. Acyrthosiphon pisum (strain 5AT).